A 62-amino-acid polypeptide reads, in one-letter code: Protein YhjR (62 aa).

This chain is Protein YhjR (yhjR), found in Escherichia coli (strain K12).